The chain runs to 167 residues: Leptin (167 aa).

A signal peptide spans M1 to A21. A disulfide bridge links C117 with C167.

It belongs to the leptin family.

It localises to the secreted. Key player in the regulation of energy balance and body weight control. Once released into the circulation, has central and peripheral effects by binding LEPR, found in many tissues, which results in the activation of several major signaling pathways. In the hypothalamus, acts as an appetite-regulating factor that induces a decrease in food intake and an increase in energy consumption by inducing anorexinogenic factors and suppressing orexigenic neuropeptides, also regulates bone mass and secretion of hypothalamo-pituitary-adrenal hormones. In the periphery, increases basal metabolism, influences reproductive function, regulates pancreatic beta-cell function and insulin secretion, is pro-angiogenic for endothelial cell and affects innate and adaptive immunity. In the arcuate nucleus of the hypothalamus, activates by depolarization POMC neurons inducing FOS and SOCS3 expression to release anorexigenic peptides and inhibits by hyperpolarization NPY neurons inducing SOCS3 with a consequent reduction on release of orexigenic peptides. In addition to its known satiety inducing effect, has a modulatory role in nutrient absorption. In the intestine, reduces glucose absorption by enterocytes by activating PKC and leading to a sequential activation of p38, PI3K and ERK signaling pathways which exerts an inhibitory effect on glucose absorption. Acts as a growth factor on certain tissues, through the activation of different signaling pathways increases expression of genes involved in cell cycle regulation such as CCND1, via JAK2-STAT3 pathway, or VEGFA, via MAPK1/3 and PI3K-AKT1 pathways. May also play an apoptotic role via JAK2-STAT3 pathway and up-regulation of BIRC5 expression. Pro-angiogenic, has mitogenic activity on vascular endothelial cells and plays a role in matrix remodeling by regulating the expression of matrix metalloproteinases (MMPs) and tissue inhibitors of metalloproteinases (TIMPs). In innate immunity, modulates the activity and function of neutrophils by increasing chemotaxis and the secretion of oxygen radicals. Increases phagocytosis by macrophages and enhances secretion of pro-inflammatory mediators. Increases cytotoxic ability of NK cells. Plays a pro-inflammatory role, in synergy with IL1B, by inducing NOS2 which promotes the production of IL6, IL8 and Prostaglandin E2, through a signaling pathway that involves JAK2, PI3K, MAP2K1/MEK1 and MAPK14/p38. In adaptive immunity, promotes the switch of memory T-cells towards T helper-1 cell immune responses. Increases CD4(+)CD25(-) T-cell proliferation and reduces autophagy during TCR (T-cell receptor) stimulation, through MTOR signaling pathway activation and BCL2 up-regulation. The chain is Leptin (LEP) from Phoca vitulina (Harbor seal).